The chain runs to 450 residues: E3 ubiquitin-protein ligase XB3 (450 aa).

ANK repeat units follow at residues 11-40 (GDEH…SLAR), 46-75 (DRLS…PPDA), 79-108 (HKQT…NILM), 113-142 (HART…TTPV), 158-187 (HGAT…IVSA), and 195-225 (PGST…RLQR). The segment at 291–312 (ILNGTKYSLPSPSPGDDSADDD) is disordered. Residues 323–372 (CCICFDQACTIEVQDCGHQMCAPCTLALCCHNKPNPTTLTPPSPACPFCR) form an RING-type zinc finger. Residues 385-450 (SACDPDKPSS…SNLDKPEHDL (66 aa)) form a disordered region.

In terms of assembly, interacts (via ankyrin repeats) with XA21. In terms of processing, phosphorylated by XA21.

It carries out the reaction S-ubiquitinyl-[E2 ubiquitin-conjugating enzyme]-L-cysteine + [acceptor protein]-L-lysine = [E2 ubiquitin-conjugating enzyme]-L-cysteine + N(6)-ubiquitinyl-[acceptor protein]-L-lysine.. It functions in the pathway protein modification; protein ubiquitination. In terms of biological role, E3 ubiquitin-protein ligase required for full accumulation of the LRR receptor kinase XA21 and XA21-mediated disease resistance. Binding to XA21 may stabilize the receptor kinase and maintain its protein level. Autoubiquitinated in vitro. In Oryza sativa subsp. japonica (Rice), this protein is E3 ubiquitin-protein ligase XB3 (XB3).